Consider the following 98-residue polypeptide: Keratinocyte differentiation-associated protein (98 aa).

Positions 1–22 are cleaved as a signal peptide; that stretch reads MKIPILPIVALLSLLALHAAQG.

Ubiquitously expressed in stratified epithelium.

Its subcellular location is the secreted. Its function is as follows. May act as a soluble regulator of keratinocyte differentiation. May play an important role in embryonic skin morphogenesis. The chain is Keratinocyte differentiation-associated protein from Rattus norvegicus (Rat).